Here is a 750-residue protein sequence, read N- to C-terminus: EF-hand domain-containing family member C2 (750 aa).

3 consecutive DM10 domains span residues 75-182 (DKQV…KKIG), 226-368 (DGKV…RTKY), and 430-537 (ISNI…ENNT). An EF-hand domain is found at 557–592 (SKSREITQVFAAADYNHTKVVPYNTFRDILMSITMG).

Microtubule inner protein component of sperm flagellar doublet microtubules.

The protein resides in the cytoplasm. It localises to the cytoskeleton. It is found in the cilium axoneme. Its subcellular location is the flagellum axoneme. In terms of biological role, microtubule inner protein (MIP) part of the dynein-decorated doublet microtubules (DMTs) in cilia axoneme, which is required for motile cilia beating. This is EF-hand domain-containing family member C2 (Efhc2) from Mus musculus (Mouse).